The primary structure comprises 58 residues: Arabinogalactan protein 21 (58 aa).

The N-terminal stretch at 1-24 (MEAMKMKMMVFIMVVAVAFSAATA) is a signal peptide. 4-hydroxyproline occurs at positions 30, 32, and 34. Residues proline 30, proline 32, and proline 34 are each glycosylated (O-linked (Ara...) hydroxyproline). The GPI-anchor amidated serine moiety is linked to residue serine 36. The propeptide at 37-58 (DAAMFVPALFASVVALASGFIF) is removed in mature form.

Belongs to the AG-peptide AGP family. In terms of processing, contains 4-hydroxyproline; hydroxylated on Pro-30, Pro-32 and Pro-34. Post-translationally, O-glycosylated on hydroxyprolines; noncontiguous hydroxylproline residues are glycosylated with arabinogalactan.

The protein localises to the cell membrane. Proteoglycan that seems to be implicated in diverse developmental roles such as differentiation, cell-cell recognition, embryogenesis and programmed cell death. This is Arabinogalactan protein 21 from Arabidopsis thaliana (Mouse-ear cress).